Reading from the N-terminus, the 296-residue chain is 4-hydroxy-tetrahydrodipicolinate synthase (296 aa).

Residue Thr-49 participates in pyruvate binding. Tyr-137 serves as the catalytic Proton donor/acceptor. The active-site Schiff-base intermediate with substrate is Lys-166. Ile-208 serves as a coordination point for pyruvate.

Belongs to the DapA family. Homotetramer; dimer of dimers.

The protein resides in the cytoplasm. The enzyme catalyses L-aspartate 4-semialdehyde + pyruvate = (2S,4S)-4-hydroxy-2,3,4,5-tetrahydrodipicolinate + H2O + H(+). It participates in amino-acid biosynthesis; L-lysine biosynthesis via DAP pathway; (S)-tetrahydrodipicolinate from L-aspartate: step 3/4. Functionally, catalyzes the condensation of (S)-aspartate-beta-semialdehyde [(S)-ASA] and pyruvate to 4-hydroxy-tetrahydrodipicolinate (HTPA). The chain is 4-hydroxy-tetrahydrodipicolinate synthase from Chlorobium chlorochromatii (strain CaD3).